We begin with the raw amino-acid sequence, 84 residues long: Small ribosomal subunit protein bS18 (84 aa).

Belongs to the bacterial ribosomal protein bS18 family. As to quaternary structure, part of the 30S ribosomal subunit. Forms a tight heterodimer with protein bS6.

Binds as a heterodimer with protein bS6 to the central domain of the 16S rRNA, where it helps stabilize the platform of the 30S subunit. This is Small ribosomal subunit protein bS18 from Vesicomyosocius okutanii subsp. Calyptogena okutanii (strain HA).